The chain runs to 43 residues: Protein PsbN (43 aa).

Residues 3–23 (IATLVAIFISGLLVSFTGYAL) form a helical membrane-spanning segment.

It belongs to the PsbN family.

It localises to the plastid. Its subcellular location is the chloroplast thylakoid membrane. In terms of biological role, may play a role in photosystem I and II biogenesis. The polypeptide is Protein PsbN (Euonymus alatus (Burning bush)).